Here is a 528-residue protein sequence, read N- to C-terminus: Protein MGF 505-7R (528 aa).

5 ANK repeats span residues 54–83 (SINDALQLAGEEGDTDVVQLLLLWEGNLHY), 129–158 (GCDLICLLQHAVKCDMLSILVKYKEDLLNV), 261–290 (SVKRALSYAVIDNKRKIIDYLVRHENIPRG), 292–321 (IERLLHLAVKKQSSRKTLNLLLSYINYKVK), and 322–352 (NVKKLLEHVVKYNSTLVIRILLEKKKNLLDA).

Belongs to the asfivirus MGF 505 family. As to quaternary structure, interacts with host STING1. Interacts with host JAK1; this interaction leads to JAK1 degradation. Interacts with host JAK2; this interaction leads to JAK2 degradation. Interacts with host RELA; this interaction inhibits NF-kappa-B promoter activity.

It localises to the host cytoplasm. Plays a role in virus cell tropism, and may be required for efficient virus replication in macrophages. Interferes with host NF-kappa-B promoter activity mediated by TLR8. Mechanistically, inhibits the phosphorylation and subsequent nuclear translocation of host NF-kappa-B RELA subunit downstream of TLR8. Promotes the expression of the autophagy-related protein host ULK1 to degrade host STING and inhibit the interferon response. Inhibits also JAK1- and JAK2-mediated signaling and thus negatively regulates the IFN-gamma signaling. In African swine fever virus (strain Badajoz 1971 Vero-adapted) (Ba71V), this protein is Protein MGF 505-7R.